Here is a 565-residue protein sequence, read N- to C-terminus: Periplasmic trehalase (565 aa).

The N-terminal stretch at 1-30 (MKSPAPSRPQKMALIPACIFLCFAALSVQA) is a signal peptide. Residues R152, 159–160 (WD), N196, 205–207 (RSQ), 277–279 (RPE), and G310 each bind substrate. Catalysis depends on proton donor/acceptor residues D312 and E496. E511 contributes to the substrate binding site. The interval 538–565 (PCDNVPATRPTVKSATTQPSTKEAQPTP) is disordered. Polar residues predominate over residues 548–565 (TVKSATTQPSTKEAQPTP).

It belongs to the glycosyl hydrolase 37 family. As to quaternary structure, monomer.

The protein localises to the periplasm. The catalysed reaction is alpha,alpha-trehalose + H2O = alpha-D-glucose + beta-D-glucose. Its function is as follows. Provides the cells with the ability to utilize trehalose at high osmolarity by splitting it into glucose molecules that can subsequently be taken up by the phosphotransferase-mediated uptake system. The protein is Periplasmic trehalase of Escherichia coli (strain K12 / MC4100 / BW2952).